The primary structure comprises 110 residues: UPF0122 protein RBAM_015800 (110 aa).

The protein belongs to the UPF0122 family.

In terms of biological role, might take part in the signal recognition particle (SRP) pathway. This is inferred from the conservation of its genetic proximity to ftsY/ffh. May be a regulatory protein. The protein is UPF0122 protein RBAM_015800 of Bacillus velezensis (strain DSM 23117 / BGSC 10A6 / LMG 26770 / FZB42) (Bacillus amyloliquefaciens subsp. plantarum).